The following is a 308-amino-acid chain: tRNA pseudouridine synthase B (308 aa).

The Nucleophile role is filled by Asp-44.

It belongs to the pseudouridine synthase TruB family. Type 1 subfamily.

It catalyses the reaction uridine(55) in tRNA = pseudouridine(55) in tRNA. In terms of biological role, responsible for synthesis of pseudouridine from uracil-55 in the psi GC loop of transfer RNAs. The chain is tRNA pseudouridine synthase B from Bdellovibrio bacteriovorus (strain ATCC 15356 / DSM 50701 / NCIMB 9529 / HD100).